We begin with the raw amino-acid sequence, 288 residues long: Bifunctional protein FolD 2 (288 aa).

NADP(+) contacts are provided by residues 166-168 (GRS) and Ser191.

Belongs to the tetrahydrofolate dehydrogenase/cyclohydrolase family. As to quaternary structure, homodimer.

The enzyme catalyses (6R)-5,10-methylene-5,6,7,8-tetrahydrofolate + NADP(+) = (6R)-5,10-methenyltetrahydrofolate + NADPH. It carries out the reaction (6R)-5,10-methenyltetrahydrofolate + H2O = (6R)-10-formyltetrahydrofolate + H(+). It functions in the pathway one-carbon metabolism; tetrahydrofolate interconversion. Catalyzes the oxidation of 5,10-methylenetetrahydrofolate to 5,10-methenyltetrahydrofolate and then the hydrolysis of 5,10-methenyltetrahydrofolate to 10-formyltetrahydrofolate. The chain is Bifunctional protein FolD 2 from Myxococcus xanthus (strain DK1622).